A 715-amino-acid polypeptide reads, in one-letter code: Metastasis-associated protein MTA1 (715 aa).

Positions 1-164 (MAANMYRVGD…PQQKTLLADK (164 aa)) constitute a BAH domain. Residues 165–276 (GEIRVGNRYQ…KAISALVPQG (112 aa)) form the ELM2 domain. A Glycyl lysine isopeptide (Lys-Gly) (interchain with G-Cter in ubiquitin) cross-link involves residue Lys-182. One can recognise an SANT domain in the interval 283-335 (DEMEEWSASEANLFEEALEKYGKDFTDIQQDFLPWKSLTSIIEYYYMWKTTDR). Residue Ser-386 is modified to Phosphoserine. The GATA-type; atypical zinc-finger motif lies at 393–420 (CESCYTTQSYQWYSWGPPNMQCRLCASC). The interval 437-460 (DGERPGPNRNNMSPHGIPARSSGS) is disordered. Position 449 is a phosphoserine (Ser-449). Residue Lys-509 forms a Glycyl lysine isopeptide (Lys-Gly) (interchain with G-Cter in SUMO2 and SUMO3) linkage. At Ser-522 the chain carries Phosphoserine. Residues 542 to 552 (ETHPRPPKPDP) are compositionally biased toward basic and acidic residues. Positions 542–590 (ETHPRPPKPDPVKSSSSVLSSLTPAKSAPVINNGSPTILGKRSYEQHNG) are disordered. Residues 545-552 (PRPPKPDP) carry the SH3-binding motif. Lys-549 is covalently cross-linked (Glycyl lysine isopeptide (Lys-Gly) (interchain with G-Cter in SUMO2)). The span at 553–565 (VKSSSSVLSSLTP) shows a compositional bias: low complexity. Phosphothreonine is present on Thr-564. Ser-576 bears the Phosphoserine mark. At Thr-578 the chain carries Phosphothreonine. N6-acetyllysine; alternate is present on Lys-626. Residue Lys-626 forms a Glycyl lysine isopeptide (Lys-Gly) (interchain with G-Cter in ubiquitin); alternate linkage. Position 639 is a phosphoserine (Ser-639). Residues 656-686 (DVFYMATEETRKIRKLLSSSETKRAARRPYK) are interaction with RBBP4. A disordered region spans residues 673 to 715 (SSSETKRAARRPYKPIALRQSQALPLRPPPPAPVNDEPIVIED). An SH3-binding motif is present at residues 696 to 705 (LPLRPPPPAP). Positions 711-715 (IVIED) match the SUMO interaction motif 1 (SIM); crucial for efficient sumoylation motif.

The protein belongs to the metastasis-associated protein family. Component of the nucleosome remodeling and deacetylase (NuRD) repressor complex, composed of core proteins MTA1, MTA2, MTA3, RBBP4, RBBP7, HDAC1, HDAC2, MBD2, MBD3, and peripherally associated proteins CDK2AP1, CDK2AP2, GATAD2A, GATAD2B, CHD3, CHD4 and CHD5. The exact stoichiometry of the NuRD complex is unknown, and some subunits such as MBD2 and MBD3, GATAD2A and GATAD2B, and CHD3, CHD4 and CHD5 define mutually exclusive NuRD complexes. Interacts with RBBP4; the interaction is direct. Interacts with BMAL1. Interacts with CLOCK. Interacts with COP1. Interacts with CSNK1G2 in the cytoplasm. Interacts with EP300. Interacts with HDAC2. Interacts with ITGB3BP/CENPR. Interacts with MBD3L2. Interacts with MDM2. Interacts with NACC2. Interacts with p53/TP53. Interacts with PIAS1. Interacts with PIAS3. Interacts with PIAS4. Interacts with PWWP2A. Interacts with PWWP2B. Interacts with SENP1. Interacts with SENP2. Interacts with SIX3; facilitates the binding of SIX3 to the core DNA motif of SIX3 promoter. Interacts with SUMO1. Interacts with SUMO2. Interacts with TFCP2L1; which is indispensable for TFCP2L1-mediated self-renewal-promoting effect and endoderm-inhibiting action. Interacts with TFAP2C. Interacts with TPR. Interacts with UBE2I/UBC9. Post-translationally, phosphorylation by CSNK1G2/CK1 triggered by estrogen enhances corepression of estrogen receptor (ER). Acetylation is essential for its transcriptional coactivator activity. In terms of processing, sumoylation positively regulates its transcriptional corepressor activity but does not affect the protein stability. Sumoylated preferentially by SUMO2 or SUMO3 than SUMO1. Sumoylation is enhanced by PIAS1/3/4 and preferentially sumoylated by SUMO2 in the presence of PIAS1/3/4. Desumoylated by SENP1. Post-translationally, ubiquitinated by COP1, which leads to proteasomal degradation. Widely expressed but not in skeletal muscle. Highly expressed in the brain, liver, kidney and cardiac muscle and in mammary tumors.

It is found in the nucleus. The protein localises to the nucleus envelope. It localises to the cytoplasm. Its subcellular location is the cytoskeleton. In terms of biological role, transcriptional coregulator which can act as both a transcriptional corepressor and coactivator. Acts as a component of the histone deacetylase NuRD complex which participates in the remodeling of chromatin. In the NuRD complex, regulates transcription of its targets by modifying the acetylation status of the target chromatin and cofactor accessibility to the target DNA. In conjunction with other components of NuRD, acts as a transcriptional corepressor of BRCA1, ESR1, TFF1 and CDKN1A. Acts as a transcriptional coactivator of BCAS3, PAX5 and SUMO2, independent of the NuRD complex. Stimulates the expression of WNT1 by inhibiting the expression of its transcriptional corepressor SIX3. Regulates p53-dependent and -independent DNA repair processes following genotoxic stress. Regulates the stability and function of p53/TP53 by inhibiting its ubiquitination by COP1 and MDM2 thereby regulating the p53-dependent DNA repair. Plays a role in the regulation of the circadian clock and is essential for the generation and maintenance of circadian rhythms under constant light and for normal entrainment of behavior to light-dark (LD) cycles. Positively regulates the CLOCK-BMAL1 heterodimer mediated transcriptional activation of its own transcription and the transcription of CRY1. Regulates deacetylation of BMAL1 by regulating SIRT1 expression, resulting in derepressing CRY1-mediated transcription repression. With Tfcp2l1, promotes establishment and maintenance of pluripotency in embryonic stem cells (ESCs) and inhibits endoderm differentiation. In Mus musculus (Mouse), this protein is Metastasis-associated protein MTA1 (Mta1).